The following is a 161-amino-acid chain: Probable ribosome biogenesis protein RLP24 (161 aa).

It belongs to the eukaryotic ribosomal protein eL24 family. In terms of assembly, associated with nucleolar and cytoplasmic pre-60S particles. At the end of biogenesis it dissociates from cytoplasmic pre-60S particles and is likely to be exchanged for its ribosomal homolog, RPL24.

It is found in the nucleus. The protein localises to the nucleolus. Involved in the biogenesis of the 60S ribosomal subunit. Ensures the docking of GTPBP4/NOG1 to pre-60S particles. The polypeptide is Probable ribosome biogenesis protein RLP24 (rsl24d1) (Danio rerio (Zebrafish)).